The chain runs to 622 residues: Protein lev-9 (622 aa).

The signal sequence occupies residues 1 to 16 (MRFLLLLAISITYASA). The WAP; atypical domain maps to 17–61 (LSCPEVTLSQRPKHCKKECIADEDCKRNKRCMCDGECGLSCVNPI). 19 disulfides stabilise this stretch: Cys19–Cys49, Cys35–Cys47, Cys41–Cys57, Cys64–Cys105, Cys91–Cys118, Cys124–Cys171, Cys154–Cys188, Cys193–Cys233, Cys219–Cys246, Cys251–Cys291, Cys277–Cys304, Cys309–Cys349, Cys335–Cys362, Cys366–Cys409, Cys395–Cys420, Cys425–Cys467, Cys452–Cys481, Cys486–Cys543, and Cys529–Cys556. 8 consecutive Sushi domains span residues 62–120 (AMCH…VCRL), 122–190 (LKCG…RCKA), 191–248 (RACP…NCKA), 249–306 (TECS…RCEE), 307–364 (IRCS…RCLA), 365–422 (SCRV…VCSP), 423–483 (LSCH…KCLP), and 484–558 (SWCE…KCVS). Asn411 carries an N-linked (GlcNAc...) asparagine glycan. Positions 576-622 (SLPGRAVREYVDDELSTHRQHSGKCGIVSGKLERMIMQHSDNGVSVC) are excised as a propeptide.

In terms of processing, proteolytic processing of the C-terminus is required for clustering activity but not for secretion nor traffic.

It localises to the synapse. The protein localises to the secreted. Its function is as follows. Scaffolding protein that is necessary to cluster acetylcholine receptors at neuromuscular junctions. The sequence is that of Protein lev-9 (lev-9) from Caenorhabditis elegans.